Reading from the N-terminus, the 887-residue chain is Bifunctional uridylyltransferase/uridylyl-removing enzyme (887 aa).

Residues 1–337 (MINTSPLLNY…RLPNYERKIE (337 aa)) form a uridylyltransferase region. Residues 339 to 699 (VNDHFKIVDN…AHRKAAQDAV (361 aa)) are uridylyl-removing. Positions 457 to 579 (VDAHTLLLLR…LGDMEHLDYL (123 aa)) constitute an HD domain. ACT domains follow at residues 700 to 782 (QIFI…LMQR) and 809 to 887 (MVEI…ICQH).

It belongs to the GlnD family. Mg(2+) is required as a cofactor.

It catalyses the reaction [protein-PII]-L-tyrosine + UTP = [protein-PII]-uridylyl-L-tyrosine + diphosphate. The enzyme catalyses [protein-PII]-uridylyl-L-tyrosine + H2O = [protein-PII]-L-tyrosine + UMP + H(+). With respect to regulation, uridylyltransferase (UTase) activity is inhibited by glutamine, while glutamine activates uridylyl-removing (UR) activity. Modifies, by uridylylation and deuridylylation, the PII regulatory proteins (GlnB and homologs), in response to the nitrogen status of the cell that GlnD senses through the glutamine level. Under low glutamine levels, catalyzes the conversion of the PII proteins and UTP to PII-UMP and PPi, while under higher glutamine levels, GlnD hydrolyzes PII-UMP to PII and UMP (deuridylylation). Thus, controls uridylylation state and activity of the PII proteins, and plays an important role in the regulation of nitrogen assimilation and metabolism. The sequence is that of Bifunctional uridylyltransferase/uridylyl-removing enzyme from Acinetobacter baumannii (strain ACICU).